Consider the following 27-residue polypeptide: Secretin (27 aa).

Leu27 is modified (leucine amide).

Belongs to the glucagon family.

It is found in the secreted. Its function is as follows. Hormone involved in different processes, such as regulation of the pH of the duodenal content, food intake and water homeostasis. Exerts its biological effects by binding to secretin receptor (SCTR), a G-protein coupled receptor expressed in the basolateral domain of several cells. Acts as a key gastrointestinal hormone by regulating the pH of the duodenal content. Secreted by S cells of the duodenum in the crypts of Lieberkuehn and regulates the pH of the duodenum by (1) inhibiting the secretion of gastric acid from the parietal cells of the stomach and (2) stimulating the production of bicarbonate (NaHCO(3)) from the ductal cells of the pancreas. Production of bicarbonate is essential to neutralize the pH and ensure no damage is done to the small intestine by the gastric acid. In addition to regulating the pH of the duodenal content, plays a central role in diet induced thermogenesis: acts as a non-sympathetic brown fat (BAT) activator mediating prandial thermogenesis, which consequentially induces satiation. Mechanistically, secretin released by the gut after a meal binds to secretin receptor (SCTR) in brown adipocytes, activating brown fat thermogenesis by stimulating lipolysis, which is sensed in the brain and promotes satiation. Also able to stimulate lipolysis in white adipocytes. Also plays an important role in cellular osmoregulation: released into the systemic circulation in response to hyperosmolality and acts at different levels in the hypothalamus, pituitary and kidney to regulate water homeostasis. Also plays a role in the central nervous system, possibly by acting as a neuropeptide hormone: required for hippocampal synaptic function and neural progenitor cells maintenance. This is Secretin from Oryctolagus cuniculus (Rabbit).